Consider the following 434-residue polypeptide: Alpha-enolase (434 aa).

Position 40 (serine 40) interacts with Mg(2+). Substrate is bound by residues histidine 158 and glutamate 167. Catalysis depends on glutamate 210, which acts as the Proton donor. Mg(2+) contacts are provided by aspartate 245, glutamate 293, and aspartate 318. Residues glutamate 293 and aspartate 318 each coordinate substrate. Lysine 343 serves as the catalytic Proton acceptor. Substrate-binding positions include 370–373 (SHRS) and lysine 394.

The protein belongs to the enolase family. As to quaternary structure, homodimer. The cofactor is Mg(2+).

The protein localises to the cytoplasm. It carries out the reaction (2R)-2-phosphoglycerate = phosphoenolpyruvate + H2O. Its pathway is carbohydrate degradation; glycolysis; pyruvate from D-glyceraldehyde 3-phosphate: step 4/5. Functionally, both an enzyme and a lens structural protein. This is Alpha-enolase (ENO1) from Anas platyrhynchos (Mallard).